Here is a 247-residue protein sequence, read N- to C-terminus: Cell division protein ZapD (247 aa).

Belongs to the ZapD family. In terms of assembly, interacts with FtsZ.

The protein resides in the cytoplasm. Functionally, cell division factor that enhances FtsZ-ring assembly. Directly interacts with FtsZ and promotes bundling of FtsZ protofilaments, with a reduction in FtsZ GTPase activity. The chain is Cell division protein ZapD from Escherichia coli O17:K52:H18 (strain UMN026 / ExPEC).